The chain runs to 296 residues: UDP-N-acetylglucosamine transporter TMEM241 homolog (296 aa).

Transmembrane regions (helical) follow at residues 7–29, 41–61, 67–87, 93–113, 126–146, 147–167, 187–207, 217–237, 248–266, and 272–291; these read AVGL…VLSV, WQTL…WLEI, SDVV…YAGS, LPIP…YGFQ, IFSI…DPQF, DADG…YKVF, VFSV…ISAL, FHSG…ASVK, ASWN…LIYF, and VPLT…LVYA.

Belongs to the nucleotide-sugar transporter family. SLC35A subfamily.

Its subcellular location is the golgi apparatus. The protein localises to the cis-Golgi network membrane. Golgi-localized UDP-N-acetylglucosamine (UDP-GlcNAc) transporter that transports UDP-N-acetylglucosamine into Golgi lumen. This is UDP-N-acetylglucosamine transporter TMEM241 homolog (tmem241) from Xenopus laevis (African clawed frog).